A 331-amino-acid polypeptide reads, in one-letter code: Ornithine carbamoyltransferase (331 aa).

Carbamoyl phosphate is bound by residues 55–58 (STRT), Gln-82, Arg-106, and 133–136 (HPTQ). Residues Asn-166, Asp-230, and 234 to 235 (SM) contribute to the L-ornithine site. Residues 272-273 (CL) and Arg-317 each bind carbamoyl phosphate.

Belongs to the aspartate/ornithine carbamoyltransferase superfamily. OTCase family.

It is found in the cytoplasm. It catalyses the reaction carbamoyl phosphate + L-ornithine = L-citrulline + phosphate + H(+). The protein operates within amino-acid biosynthesis; L-arginine biosynthesis; L-arginine from L-ornithine and carbamoyl phosphate: step 1/3. Its function is as follows. Reversibly catalyzes the transfer of the carbamoyl group from carbamoyl phosphate (CP) to the N(epsilon) atom of ornithine (ORN) to produce L-citrulline. The polypeptide is Ornithine carbamoyltransferase (argF) (Neisseria meningitidis serogroup B (strain ATCC BAA-335 / MC58)).